A 437-amino-acid chain; its full sequence is Enolase (437 aa).

Positions 160 and 169 each coordinate substrate. The active-site Proton donor is glutamate 212. Mg(2+)-binding residues include aspartate 247, glutamate 296, and aspartate 321. Residues glutamate 296 and aspartate 321 each coordinate substrate. The Proton acceptor role is filled by lysine 346. Substrate is bound by residues 373 to 376 (SHRS) and lysine 397.

This sequence belongs to the enolase family. As to quaternary structure, homodimer. The cofactor is Mg(2+).

Its subcellular location is the cytoplasm. It carries out the reaction (2R)-2-phosphoglycerate = phosphoenolpyruvate + H2O. It participates in carbohydrate degradation; glycolysis; pyruvate from D-glyceraldehyde 3-phosphate: step 4/5. The protein is Enolase (ENO) of Eremothecium gossypii (strain ATCC 10895 / CBS 109.51 / FGSC 9923 / NRRL Y-1056) (Yeast).